The chain runs to 254 residues: Anti-sigma-M factor RsmA (254 aa).

The Cytoplasmic portion of the chain corresponds to 1-112 (MSAADKDPDK…AARPHVHPVR (112 aa)). Residues 113–133 (MIAGAAGLCAVATAIGVGAVV) form a helical membrane-spanning segment. At 134 to 254 (DAPPPAPSAP…LLASTVVPRA (121 aa)) the chain is on the extracellular side.

Interacts with ECF RNA polymerase sigma factor SigM; this should inhibit the interaction of SigM with the RNA polymerase catalytic core. Probably cleaved within the membrane by Rip1 near the cytoplasmic membrane interface.

The protein localises to the cell membrane. Its function is as follows. An anti-sigma factor for extracytoplasmic function (ECF) sigma factor SigM. ECF sigma factors are held in an inactive form by an anti-sigma factor until released by regulated intramembrane proteolysis (RIP). RIP occurs when an extracytoplasmic signal triggers a concerted proteolytic cascade to transmit information and elicit cellular responses. The membrane-spanning regulatory substrate protein is first cut extracytoplasmically (site-1 protease, S1P), then within the membrane itself (site-2 protease, S2P, Rip1), while cytoplasmic proteases finish degrading the regulatory protein, liberating the sigma factor. The sequence is that of Anti-sigma-M factor RsmA (rsmA) from Mycobacterium tuberculosis (strain ATCC 35801 / TMC 107 / Erdman).